Consider the following 340-residue polypeptide: Flap endonuclease 1 (340 aa).

Positions 1 to 98 (MGLNLKDLVV…AEIERRKQIK (98 aa)) are N-domain. Residues Asp27, Asp80, Glu152, Glu154, Asp173, Asp175, and Asp236 each contribute to the Mg(2+) site. The interval 116-258 (DARKYAQQTT…TALKMIKQHS (143 aa)) is I-domain.

Belongs to the XPG/RAD2 endonuclease family. FEN1 subfamily. Interacts with PCNA. PCNA stimulates the nuclease activity without altering cleavage specificity. The cofactor is Mg(2+).

Its function is as follows. Structure-specific nuclease with 5'-flap endonuclease and 5'-3' exonuclease activities involved in DNA replication and repair. During DNA replication, cleaves the 5'-overhanging flap structure that is generated by displacement synthesis when DNA polymerase encounters the 5'-end of a downstream Okazaki fragment. Binds the unpaired 3'-DNA end and kinks the DNA to facilitate 5' cleavage specificity. Cleaves one nucleotide into the double-stranded DNA from the junction in flap DNA, leaving a nick for ligation. Also involved in the base excision repair (BER) pathway. Acts as a genome stabilization factor that prevents flaps from equilibrating into structures that lead to duplications and deletions. Also possesses 5'-3' exonuclease activity on nicked or gapped double-stranded DNA. The sequence is that of Flap endonuclease 1 from Nitrosopumilus maritimus (strain SCM1).